We begin with the raw amino-acid sequence, 278 residues long: MTVLHSVDFFPSGNASVAIEPRLPQADFPEHHHDFYEIVIVEHGTGIHVFNGQPYTITGGMVCFVRDHDRHLYEHTDNLCLTNVLYRSPDRFQFLAGLNQLLPQEQDGQYPSHWRVNHSVLQQVRQLVAQMEQQEGENDLPSTASREILFMQLLLLLRKSSLQENLENSASRLNLLLAWLEDHFADEVNWDAVADQFSLSLRTLHRQLKQQTGLTPQRYLNRLRLMKARHLLRHSEASVTDIAYRCGFSDSNHFSTLFRREFNWSPRDIRQGRDGFLQ.

An HTH araC/xylS-type domain is found at 174 to 272 (NLLLAWLEDH…NWSPRDIRQG (99 aa)). DNA-binding regions (H-T-H motif) lie at residues 191-212 (DAVADQFSLSLRTLHRQLKQQT) and 239-262 (VTDIAYRCGFSDSNHFSTLFRREF).

As to quaternary structure, binds DNA as a dimer.

Its subcellular location is the cytoplasm. Activates expression of the rhaBAD and rhaT operons. In Escherichia coli O81 (strain ED1a), this protein is HTH-type transcriptional activator RhaS.